A 154-amino-acid chain; its full sequence is MLTVDFIDDNAQIDAKHLPEIERLLIFAAEQEGIDEEAEVAVSFVDENEIQAINKAYRNKDAVTDVISFALEEGEDDFEMSDEPRVLGDIIICVKRALEQAEEYGHSFERELGFLSLHGLLHLLGYDHMNESDEARMFGRQDEILNAFGLRRDV.

Zn(2+)-binding residues include His118, His122, and His128.

The protein belongs to the endoribonuclease YbeY family. The cofactor is Zn(2+).

The protein localises to the cytoplasm. In terms of biological role, single strand-specific metallo-endoribonuclease involved in late-stage 70S ribosome quality control and in maturation of the 3' terminus of the 16S rRNA. This is Endoribonuclease YbeY from Macrococcus caseolyticus (strain JCSC5402) (Macrococcoides caseolyticum).